The chain runs to 247 residues: Sugar fermentation stimulation protein homolog (247 aa).

It belongs to the SfsA family.

The protein is Sugar fermentation stimulation protein homolog of Aeromonas hydrophila subsp. hydrophila (strain ATCC 7966 / DSM 30187 / BCRC 13018 / CCUG 14551 / JCM 1027 / KCTC 2358 / NCIMB 9240 / NCTC 8049).